A 414-amino-acid polypeptide reads, in one-letter code: Gamma-glutamyl phosphate reductase (414 aa).

It belongs to the gamma-glutamyl phosphate reductase family.

It is found in the cytoplasm. The catalysed reaction is L-glutamate 5-semialdehyde + phosphate + NADP(+) = L-glutamyl 5-phosphate + NADPH + H(+). It participates in amino-acid biosynthesis; L-proline biosynthesis; L-glutamate 5-semialdehyde from L-glutamate: step 2/2. In terms of biological role, catalyzes the NADPH-dependent reduction of L-glutamate 5-phosphate into L-glutamate 5-semialdehyde and phosphate. The product spontaneously undergoes cyclization to form 1-pyrroline-5-carboxylate. The polypeptide is Gamma-glutamyl phosphate reductase (Thermoanaerobacter sp. (strain X514)).